The chain runs to 79 residues: Large ribosomal subunit protein bL28 (79 aa).

This sequence belongs to the bacterial ribosomal protein bL28 family.

This chain is Large ribosomal subunit protein bL28, found in Christiangramia forsetii (strain DSM 17595 / CGMCC 1.15422 / KT0803) (Gramella forsetii).